A 456-amino-acid chain; its full sequence is Glutathione reductase (456 aa).

The FAD site is built by Ser-14, Gly-15, Glu-34, Thr-41, Cys-42, and Lys-50. Position 14 (Ser-14) interacts with glutathione. A disulfide bridge links Cys-42 with Cys-47. Tyr-99 contributes to the glutathione binding site. Gly-115 is an FAD binding site. NADP(+) contacts are provided by Ala-180, Ile-183, Glu-186, Arg-203, Arg-209, and Gly-267. Residue Asp-308 participates in FAD binding. Glu-315 lines the NADP(+) pocket. Thr-317 contributes to the FAD binding site. Residue Arg-325 coordinates glutathione. Val-348 lines the NADP(+) pocket. An FAD-binding site is contributed by His-445. His-445 serves as the catalytic Proton acceptor.

It belongs to the class-I pyridine nucleotide-disulfide oxidoreductase family. In terms of assembly, homodimer. FAD serves as cofactor.

Its subcellular location is the cytoplasm. It carries out the reaction 2 glutathione + NADP(+) = glutathione disulfide + NADPH + H(+). Catalyzes the reduction of glutathione disulfide (GSSG) to reduced glutathione (GSH). Constitutes the major mechanism to maintain a high GSH:GSSG ratio in the cytosol. This Haemophilus influenzae (strain ATCC 51907 / DSM 11121 / KW20 / Rd) protein is Glutathione reductase (gor).